The sequence spans 588 residues: Succinate dehydrogenase flavoprotein subunit (588 aa).

Residues 14 to 19 (GAGGAG), 37 to 52 (SKVF…AQGG), and aspartate 221 contribute to the FAD site. The residue at position 45 (histidine 45) is a Tele-8alpha-FAD histidine. Substrate contacts are provided by histidine 242 and threonine 254. Catalysis depends on arginine 286, which acts as the Proton acceptor. Histidine 354 serves as a coordination point for substrate. FAD is bound at residue glutamate 388. Residue arginine 399 participates in substrate binding. An FAD-binding site is contributed by 404–405 (SL).

The protein belongs to the FAD-dependent oxidoreductase 2 family. FRD/SDH subfamily. In terms of assembly, part of an enzyme complex containing four subunits: a flavoprotein, an iron-sulfur, cytochrome b-556, and a hydrophobic anchor protein. FAD serves as cofactor.

It is found in the cell inner membrane. It carries out the reaction a quinone + succinate = fumarate + a quinol. It participates in carbohydrate metabolism; tricarboxylic acid cycle; fumarate from succinate (bacterial route): step 1/1. In terms of biological role, two distinct, membrane-bound, FAD-containing enzymes are responsible for the catalysis of fumarate and succinate interconversion; the fumarate reductase is used in anaerobic growth, and the succinate dehydrogenase is used in aerobic growth. The protein is Succinate dehydrogenase flavoprotein subunit (sdhA) of Salmonella typhimurium (strain LT2 / SGSC1412 / ATCC 700720).